The primary structure comprises 293 residues: Cell adhesion molecule CEACAM21 (293 aa).

The signal sequence occupies residues Met1–Ala34. The Extracellular portion of the chain corresponds to Trp35–Gly240. A glycan (N-linked (GlcNAc...) asparagine) is linked at Asn111. The region spanning Pro147–Thr231 is the Ig-like C2-type domain. Cysteines 166 and 214 form a disulfide. Residues Ile241 to Leu261 traverse the membrane as a helical segment. The Cytoplasmic segment spans residues Arg262–Ser293. The tract at residues Ala267–Ser293 is disordered.

This sequence belongs to the immunoglobulin superfamily. CEA family.

The protein resides in the membrane. The polypeptide is Cell adhesion molecule CEACAM21 (Homo sapiens (Human)).